The following is a 494-amino-acid chain: Cysteine--tRNA ligase (494 aa).

Position 29 (Cys-29) interacts with Zn(2+). The short motif at 31–41 (VTVYDYCHLGH) is the 'HIGH' region element. Positions 216, 241, and 245 each coordinate Zn(2+). Positions 273–277 (KMSKS) match the 'KMSKS' region motif. Lys-276 serves as a coordination point for ATP.

The protein belongs to the class-I aminoacyl-tRNA synthetase family. As to quaternary structure, monomer. Zn(2+) serves as cofactor.

Its subcellular location is the cytoplasm. The enzyme catalyses tRNA(Cys) + L-cysteine + ATP = L-cysteinyl-tRNA(Cys) + AMP + diphosphate. The polypeptide is Cysteine--tRNA ligase (Cyanothece sp. (strain PCC 7425 / ATCC 29141)).